Consider the following 256-residue polypeptide: Homeobox protein TGIF2LX (256 aa).

The interval 1–45 (MEAAADSPAETRSRVEKDSRRVEKDSRRPKKDSPAKTQSPAQDTS) is disordered. Over residues 9 to 34 (AETRSRVEKDSRRVEKDSRRPKKDSP) the composition is skewed to basic and acidic residues. Polar residues predominate over residues 35-45 (AKTQSPAQDTS). A DNA-binding region (homeobox; TALE-type) is located at residues 62–125 (EHKKKRKGYL…INARRRILPD (64 aa)). The interval 136–224 (VGHKTGKDAN…SSSPEPVSTE (89 aa)) is disordered. Positions 166–179 (DNVQSLPLRSSPKG) are enriched in polar residues. The span at 209–224 (VSNITSSSSPEPVSTE) shows a compositional bias: low complexity.

The protein belongs to the TALE/TGIF homeobox family.

The protein resides in the nucleus. May have a transcription role in testis. The polypeptide is Homeobox protein TGIF2LX (TGIF2LX) (Papio hamadryas (Hamadryas baboon)).